A 181-amino-acid polypeptide reads, in one-letter code: Ribosome maturation factor RimM (181 aa).

In terms of domain architecture, PRC barrel spans 97-170 (AGEFWLPDLM…RIEVVAIPGL (74 aa)).

It belongs to the RimM family. As to quaternary structure, binds ribosomal protein uS19.

It localises to the cytoplasm. An accessory protein needed during the final step in the assembly of 30S ribosomal subunit, possibly for assembly of the head region. Essential for efficient processing of 16S rRNA. May be needed both before and after RbfA during the maturation of 16S rRNA. It has affinity for free ribosomal 30S subunits but not for 70S ribosomes. The polypeptide is Ribosome maturation factor RimM (Gloeobacter violaceus (strain ATCC 29082 / PCC 7421)).